We begin with the raw amino-acid sequence, 288 residues long: MEGKEEDVRLGANKFSERQPIGTAAQGSDDKDYKEPPPAPLFEPGELKSWSFYRAGIAEFMATFLFLYITVLTVMGVNNSTSKCATVGIQGIAWSFGGMIFALVYCTAGISGGHINPAVTFGLFLARKLSLTRALFYMVMQCLGAICGAGVVKGFQKGLYETTGGGANVVAPGYTKGDGLGAEIVGTFILVYTVFSATDAKRNARDSHVPILAPLPIGFAVFLVHLATIPITGTGINPARSLGAAIIYNRGHAWDDHWIFWVGPFIGAALAAIYHQVVIRAIPFKSRS.

A disordered region spans residues 1–37 (MEGKEEDVRLGANKFSERQPIGTAAQGSDDKDYKEPP). The next 2 helical transmembrane spans lie at 57 to 77 (IAEFMATFLFLYITVLTVMGV) and 92 to 114 (IAWSFGGMIFALVYCTAGISGGH). The NPA 1 signature appears at 116–118 (NPA). The next 3 membrane-spanning stretches (helical) occupy residues 135 to 155 (LFYMVMQCLGAICGAGVVKGF), 177 to 197 (GDGLGAEIVGTFILVYTVFSA), and 211 to 231 (ILAPLPIGFAVFLVHLATIPI). The short motif at 237–239 (NPA) is the NPA 2 element. Residues 259-279 (IFWVGPFIGAALAAIYHQVVI) form a helical membrane-spanning segment.

It belongs to the MIP/aquaporin (TC 1.A.8) family. PIP (TC 1.A.8.11) subfamily. In terms of tissue distribution, expressed in roots, leaves and anthers.

It is found in the cell membrane. Aquaporins facilitate the transport of water and small neutral solutes across cell membranes. This chain is Probable aquaporin PIP1-2 (PIP1-2), found in Oryza sativa subsp. japonica (Rice).